We begin with the raw amino-acid sequence, 105 residues long: ATP-dependent Clp protease adapter protein ClpS (105 aa).

Belongs to the ClpS family. As to quaternary structure, binds to the N-terminal domain of the chaperone ClpA.

Functionally, involved in the modulation of the specificity of the ClpAP-mediated ATP-dependent protein degradation. The polypeptide is ATP-dependent Clp protease adapter protein ClpS (Aeromonas salmonicida (strain A449)).